Reading from the N-terminus, the 410-residue chain is SPbeta prophage-derived uncharacterized protein YonV (410 aa).

In Bacillus subtilis (strain 168), this protein is SPbeta prophage-derived uncharacterized protein YonV (yonV).